Consider the following 526-residue polypeptide: Nitrogenase iron-iron protein alpha chain (526 aa).

3 residues coordinate [8Fe-7S] cluster: Cys49, Cys75, and Cys138. Positions 257 and 423 each coordinate [8Fe-9S-C-homocitryl] cluster. The interval 507 to 526 is disordered; sequence RNQPMPPSRKLRDAVQPAAE.

Belongs to the NifD/NifK/NifE/NifN family. As to quaternary structure, hexamer of two alpha, two beta, and two delta chains. [8Fe-7S] cluster serves as cofactor. Requires [8Fe-9S-C-homocitryl] cluster as cofactor.

It catalyses the reaction N2 + 8 reduced [2Fe-2S]-[ferredoxin] + 16 ATP + 16 H2O = H2 + 8 oxidized [2Fe-2S]-[ferredoxin] + 2 NH4(+) + 16 ADP + 16 phosphate + 6 H(+). This iron-iron protein is part of the nitrogenase complex that catalyzes the key enzymatic reactions in nitrogen fixation. Other nitrogenase complexes utilize a molybdenum-iron protein or a vanadium-iron protein. This Rhodobacter capsulatus (Rhodopseudomonas capsulata) protein is Nitrogenase iron-iron protein alpha chain (anfD).